The following is a 269-amino-acid chain: Cytochrome c oxidase subunit 3 (269 aa).

Over 1 to 22 the chain is Mitochondrial matrix; that stretch reads MTNLIRSNFQDHPFHLVSPSPW. Residues 23–41 traverse the membrane as a helical segment; sequence PLNTSVCLLNLTTTGALSM. At 42-48 the chain is on the mitochondrial intermembrane side; sequence HNFNNIH. Residues 49–73 traverse the membrane as a helical segment; sequence YLYYIALIGLVSAMFLWFRDIISEG. Over 74-80 the chain is Mitochondrial matrix; that stretch reads TFLGDHT. The chain crosses the membrane as a helical span at residues 81–114; it reads LAVQRGLNLGIILFIVSEALFFLAIFWAFFHSAL. The Mitochondrial intermembrane portion of the chain corresponds to 115–137; the sequence is TPTVELGAQWPPIGIEPVNPFEL. Residues 138-161 form a helical membrane-spanning segment; that stretch reads PLLNTVILLSSGATITYAHHALIK. At 162-164 the chain is on the mitochondrial matrix side; sequence GER. Residues 165-188 traverse the membrane as a helical segment; it reads EGALYGSIATILLAIIFTGFQGVE. The Mitochondrial intermembrane portion of the chain corresponds to 189–201; the sequence is YSVSSFTISDGAF. A helical membrane pass occupies residues 202–230; the sequence is GTCFFFSTGFHGIHVIIGTIFLAVALWRI. At 231–248 the chain is on the mitochondrial matrix side; sequence FAYHLTDNHHVGFEGGIL. A helical transmembrane segment spans residues 249-265; sequence YWHFVDVVWLFLYISVY. The Mitochondrial intermembrane portion of the chain corresponds to 266–269; that stretch reads YWGS.

The protein belongs to the cytochrome c oxidase subunit 3 family. Component of the cytochrome c oxidase (complex IV, CIV), a multisubunit enzyme composed of 11 subunits. The complex is composed of a catalytic core of 3 subunits Cox1, Cox2 and Cox3, encoded in the mitochondrial DNA, and 8 supernumerary subunits Cox4, Cox5a/Cox5, Cox6, Cox7, Cox8, Cox7a/Cox9, Cox6b/Cox12 and Cox6a/Cox13, which are encoded in the nuclear genome. The complex exists as a monomer or a dimer and forms respiratory supercomplexes (SCs) in the inner mitochondrial membrane with NADH-ubiquinone oxidoreductase (complex I, CI) and ubiquinol-cytochrome c oxidoreductase (cytochrome b-c1 complex, complex III, CIII), resulting in various different assemblies (supercomplexes I(1)IV(1), I(1)III(3)IV(2), III(2)IV(1) and III(2)IV(2) as well as larger supercomplexes of compositions like I(1)III(2)IV(5-6)).

It localises to the mitochondrion inner membrane. It catalyses the reaction 4 Fe(II)-[cytochrome c] + O2 + 8 H(+)(in) = 4 Fe(III)-[cytochrome c] + 2 H2O + 4 H(+)(out). Component of the cytochrome c oxidase, the last enzyme in the mitochondrial electron transport chain which drives oxidative phosphorylation. The respiratory chain contains 3 multisubunit complexes succinate dehydrogenase (complex II, CII), ubiquinol-cytochrome c oxidoreductase (cytochrome b-c1 complex, complex III, CIII) and cytochrome c oxidase (complex IV, CIV), that cooperate to transfer electrons derived from NADH and succinate to molecular oxygen, creating an electrochemical gradient over the inner membrane that drives transmembrane transport and the ATP synthase. Cytochrome c oxidase is the component of the respiratory chain that catalyzes the reduction of oxygen to water. Electrons originating from reduced cytochrome c in the intermembrane space (IMS) are transferred via the dinuclear copper A center (CU(A)) of Cox2 and heme A of Cox1 to the active site in Cox1, a binuclear center (BNC) formed by heme A3 and copper B (CU(B)). The BNC reduces molecular oxygen to 2 water molecules using 4 electrons from cytochrome c in the IMS and 4 protons from the mitochondrial matrix. In Neurospora crassa (strain ATCC 24698 / 74-OR23-1A / CBS 708.71 / DSM 1257 / FGSC 987), this protein is Cytochrome c oxidase subunit 3 (cox-3).